The following is a 254-amino-acid chain: Ribosomal RNA large subunit methyltransferase E (254 aa).

Residues 1-28 (MTTPPRGPDGRPLKVRVKKSRGRTTSSQ) form a disordered region. A compositionally biased stretch (basic residues) spans 13-22 (LKVRVKKSRG). S-adenosyl-L-methionine contacts are provided by G80, W82, D103, D119, and D143. The active-site Proton acceptor is K183. Residues 231 to 254 (DRAETDDAGTDGTGTAEAQAPRDQ) form a disordered region.

It belongs to the class I-like SAM-binding methyltransferase superfamily. RNA methyltransferase RlmE family.

It is found in the cytoplasm. The catalysed reaction is uridine(2552) in 23S rRNA + S-adenosyl-L-methionine = 2'-O-methyluridine(2552) in 23S rRNA + S-adenosyl-L-homocysteine + H(+). In terms of biological role, specifically methylates the uridine in position 2552 of 23S rRNA at the 2'-O position of the ribose in the fully assembled 50S ribosomal subunit. The chain is Ribosomal RNA large subunit methyltransferase E from Xanthobacter autotrophicus (strain ATCC BAA-1158 / Py2).